A 500-amino-acid chain; its full sequence is Sulfate adenylyltransferase (500 aa).

An N-terminal region spans residues 1–165 (MLSPHGGILQ…LEAIQLPAHY (165 aa)). Residues 166–390 (DYLNLRKSPA…LRQYNPPRYR (225 aa)) form a catalytic region. Glutamine 193 is a sulfate binding site. ATP is bound by residues 193–196 (QTRN) and 287–290 (GRDH). Active-site residues include threonine 194, arginine 195, and asparagine 196. Arginine 195 is a sulfate binding site. Alanine 291 is a sulfate binding site. Isoleucine 329 lines the ATP pocket. A required for oligomerization; adenylyl-sulfate kinase-like region spans residues 391–500 (QGFVIVVNHE…FLEDNKFFQF (110 aa)).

This sequence belongs to the sulfate adenylyltransferase family. As to quaternary structure, homohexamer. Dimer of trimers.

It is found in the cytoplasm. The enzyme catalyses sulfate + ATP + H(+) = adenosine 5'-phosphosulfate + diphosphate. It functions in the pathway sulfur metabolism; hydrogen sulfide biosynthesis; sulfite from sulfate: step 1/3. Catalyzes the first intracellular reaction of sulfate assimilation, forming adenosine-5'-phosphosulfate (APS) from inorganic sulfate and ATP. Plays an important role in sulfate activation as a component of the biosynthesis pathway of sulfur-containing amino acids. The sequence is that of Sulfate adenylyltransferase from Eremothecium gossypii (strain ATCC 10895 / CBS 109.51 / FGSC 9923 / NRRL Y-1056) (Yeast).